The primary structure comprises 732 residues: Coagulation factor XIII A chain (732 aa).

The tract at residues 1 to 27 is disordered; sequence MSETSRTAFGGRRAVPPNNSNAAEDDL. Serine 2 bears the N-acetylserine mark. The propeptide at 2–38 is activation peptide; the sequence is SETSRTAFGGRRAVPPNNSNAAEDDLPTVELQGVVPR. Residues cysteine 315, histidine 374, and aspartate 397 contribute to the active site. 4 residues coordinate Ca(2+): asparagine 437, aspartate 439, glutamate 486, and glutamate 491. An N-linked (GlcNAc...) asparagine glycan is attached at asparagine 614.

This sequence belongs to the transglutaminase superfamily. Transglutaminase family. As to quaternary structure, tetramer of two A chains (F13A1) and two B (F13B) chains. Ca(2+) is required as a cofactor. In terms of processing, the activation peptide is released by thrombin.

It is found in the cytoplasm. The protein resides in the secreted. It catalyses the reaction L-glutaminyl-[protein] + L-lysyl-[protein] = [protein]-L-lysyl-N(6)-5-L-glutamyl-[protein] + NH4(+). In terms of biological role, factor XIII is activated by thrombin and calcium ion to a transglutaminase that catalyzes the formation of gamma-glutamyl-epsilon-lysine cross-links between fibrin chains, thus stabilizing the fibrin clot. Also cross-link alpha-2-plasmin inhibitor, or fibronectin, to the alpha chains of fibrin. This Homo sapiens (Human) protein is Coagulation factor XIII A chain (F13A1).